We begin with the raw amino-acid sequence, 447 residues long: Alliin lyase (447 aa).

Residues 1–2 constitute a propeptide that is removed on maturation; the sequence is QA. An EGF-like; atypical domain is found at 15 to 61; sequence EAVANINCSGHGRAFLDGILSDGSPKCECNTCYTGADCSQKITGCSA. A glycan (N-linked (GlcNAc...) asparagine) is linked at Asn21. 3 disulfides stabilise this stretch: Cys22-Cys41, Cys43-Cys52, and Cys46-Cys59. 94–102 provides a ligand contact to chloride; sequence YFFNPVSNF. N-linked (GlcNAc...) asparagine glycans are attached at residues Asn148 and Asn193. Residue Lys253 is modified to N6-(pyridoxal phosphate)lysine. Asn330 is a glycosylation site (N-linked (GlcNAc...) asparagine). A disulfide bridge connects residues Cys370 and Cys378.

The protein belongs to the alliinase family. In terms of assembly, homodimer. Requires pyridoxal 5'-phosphate as cofactor.

The protein resides in the vacuole. The catalysed reaction is an S-alkyl-L-cysteine S-oxide = an S-alkyl sulfenate + 2-aminoprop-2-enoate. The chain is Alliin lyase from Allium cepa var. aggregatum (Shallot).